Consider the following 260-residue polypeptide: MVLDEIVRHKKKEVEEKKRIKPVEELINEIKGGYSGNFKKVLQKEGISIIGEIKQASPSKGIIKEDFDSVKIAKVYEKVDVDAISVLTEKEFFKGDDNYIREVKKVSSKPILRKDFIVDEYQIYESKILGADAVLLIVSVLGDKLRDFYNLSKSVGLDVLVEIHDRQQLEIALEAGCDIIGINNRDLKTFNVDINTTENLIKYIPQNTTIVSESGIKTPEDIRYLASLGVDAVLIGETFMKIIDDIDKISDFVKEAKGGG.

This sequence belongs to the TrpC family.

The enzyme catalyses 1-(2-carboxyphenylamino)-1-deoxy-D-ribulose 5-phosphate + H(+) = (1S,2R)-1-C-(indol-3-yl)glycerol 3-phosphate + CO2 + H2O. Its pathway is amino-acid biosynthesis; L-tryptophan biosynthesis; L-tryptophan from chorismate: step 4/5. This is Indole-3-glycerol phosphate synthase from Thermoanaerobacter sp. (strain X514).